Reading from the N-terminus, the 291-residue chain is G1/S-specific cyclin-D1 (291 aa).

Position 282 is a phosphothreonine (Thr-282).

The protein belongs to the cyclin family. Cyclin D subfamily. In terms of assembly, interacts with the CDK4 and CDK6 protein kinases to form a serine/threonine kinase holoenzyme complex. The cyclin subunit imparts substrate specificity to the complex. Phosphorylation at Thr-282 by MAP kinases is required for ubiquitination and degradation by the DCX(AMBRA1) complex. In terms of processing, ubiquitinated by the DCX(AMBRA1) complex during the transition from G1 to S cell phase, leading to its degradation. The DCX(AMBRA1) complex represents the major regulator of CCND1 stability during the G1/S transition.

The protein localises to the nucleus. It is found in the cytoplasm. In terms of biological role, regulatory component of the cyclin D1-CDK4 (DC) complex that phosphorylates and inhibits members of the retinoblastoma (RB) protein family including RB1 and regulates the cell-cycle during G(1)/S transition. Phosphorylation of RB1 allows dissociation of the transcription factor E2F from the RB/E2F complex and the subsequent transcription of E2F target genes which are responsible for the progression through the G(1) phase. Hypophosphorylates RB1 in early G(1) phase. Cyclin D-CDK4 complexes are major integrators of various mitogenenic and antimitogenic signals. This Danio rerio (Zebrafish) protein is G1/S-specific cyclin-D1 (ccnd1).